Consider the following 353-residue polypeptide: Phospho-N-acetylmuramoyl-pentapeptide-transferase (353 aa).

Transmembrane regions (helical) follow at residues 24-44, 66-86, 88-108, 129-149, 160-180, 192-212, 229-249, 256-276, 281-301, and 330-350; these read LGFF…ILWA, TPTM…VLCA, LGNL…FVGF, FGML…KGLD, PLFE…FLST, GLAS…VYVA, VGEL…FLWY, VFMG…NAIV, ILLV…ILQV, and KVIV…LLSL.

It belongs to the glycosyltransferase 4 family. MraY subfamily. Mg(2+) is required as a cofactor.

The protein resides in the cell inner membrane. It carries out the reaction UDP-N-acetyl-alpha-D-muramoyl-L-alanyl-gamma-D-glutamyl-meso-2,6-diaminopimeloyl-D-alanyl-D-alanine + di-trans,octa-cis-undecaprenyl phosphate = di-trans,octa-cis-undecaprenyl diphospho-N-acetyl-alpha-D-muramoyl-L-alanyl-D-glutamyl-meso-2,6-diaminopimeloyl-D-alanyl-D-alanine + UMP. It participates in cell wall biogenesis; peptidoglycan biosynthesis. Its function is as follows. Catalyzes the initial step of the lipid cycle reactions in the biosynthesis of the cell wall peptidoglycan: transfers peptidoglycan precursor phospho-MurNAc-pentapeptide from UDP-MurNAc-pentapeptide onto the lipid carrier undecaprenyl phosphate, yielding undecaprenyl-pyrophosphoryl-MurNAc-pentapeptide, known as lipid I. The sequence is that of Phospho-N-acetylmuramoyl-pentapeptide-transferase from Helicobacter pylori (strain HPAG1).